We begin with the raw amino-acid sequence, 154 residues long: Cyclin-dependent protein kinase inhibitor SMR14 (154 aa).

The interval 1 to 111 (MSKIKIFHLF…RPPRKPKAIP (111 aa)) is disordered. The segment covering 24 to 37 (SLLVPSKSDSLDSS) has biased composition (low complexity). A compositionally biased stretch (basic and acidic residues) spans 74-83 (KWECKDEESP).

Its function is as follows. Probable cyclin-dependent protein kinase (CDK) inhibitor that functions as a repressor of mitosis in the endoreduplication cell cycle. This chain is Cyclin-dependent protein kinase inhibitor SMR14, found in Arabidopsis thaliana (Mouse-ear cress).